Reading from the N-terminus, the 241-residue chain is Uridylate kinase (241 aa).

15–18 is an ATP binding site; that stretch reads KLSG. Residues 23–28 form an involved in allosteric activation by GTP region; it reads GAEGFG. Residue G57 coordinates UMP. ATP contacts are provided by G58 and R62. Residues D77 and 138–145 each bind UMP; that span reads TGNPFFTT. ATP is bound by residues T165, Y171, and D174.

It belongs to the UMP kinase family. As to quaternary structure, homohexamer.

It localises to the cytoplasm. The catalysed reaction is UMP + ATP = UDP + ADP. It participates in pyrimidine metabolism; CTP biosynthesis via de novo pathway; UDP from UMP (UMPK route): step 1/1. Its activity is regulated as follows. Allosterically activated by GTP. Inhibited by UTP. Catalyzes the reversible phosphorylation of UMP to UDP. The protein is Uridylate kinase of Yersinia pseudotuberculosis serotype O:1b (strain IP 31758).